Reading from the N-terminus, the 106-residue chain is Large ribosomal subunit protein bL21 (106 aa).

It belongs to the bacterial ribosomal protein bL21 family. Part of the 50S ribosomal subunit. Contacts protein L20.

Its function is as follows. This protein binds to 23S rRNA in the presence of protein L20. In Xylella fastidiosa (strain Temecula1 / ATCC 700964), this protein is Large ribosomal subunit protein bL21.